The chain runs to 215 residues: Guanylate kinase (215 aa).

Residues 6-185 (GAILVLSGPS…SEKLLLSIAR (180 aa)) enclose the Guanylate kinase-like domain. Position 13-20 (13-20 (GPSGSGKS)) interacts with ATP.

It belongs to the guanylate kinase family.

The protein resides in the cytoplasm. The enzyme catalyses GMP + ATP = GDP + ADP. Functionally, essential for recycling GMP and indirectly, cGMP. The protein is Guanylate kinase of Wolinella succinogenes (strain ATCC 29543 / DSM 1740 / CCUG 13145 / JCM 31913 / LMG 7466 / NCTC 11488 / FDC 602W) (Vibrio succinogenes).